Reading from the N-terminus, the 359-residue chain is 4-dedimethylamino-4-oxo-anhydrotetracycline transaminase OxyQ (359 aa).

Residues Gly32, Lys92, and Asn155 each coordinate substrate. Pyridoxal 5'-phosphate contacts are provided by residues 91 to 92 (TK), Asn155, Tyr186, and 216 to 218 (SLS). At Lys219 the chain carries N6-(pyridoxal phosphate)lysine. Position 227 (Arg227) interacts with pyridoxal 5'-phosphate. Arg341 contributes to the substrate binding site.

It belongs to the class-I pyridoxal-phosphate-dependent aminotransferase family. Pyridoxal 5'-phosphate is required as a cofactor.

It functions in the pathway antibiotic biosynthesis; oxytetracycline biosynthesis. Its function is as follows. Involved in the biosynthesis of the tetracycline antibiotic, oxytetracycline. Catalyzes the conversion of 4-dedimethylamino-4-oxoanhydrotetracycline to yield 4-amino-4-de(dimethylamino)anhydrotetracycline (4-amino-ATC). This is 4-dedimethylamino-4-oxo-anhydrotetracycline transaminase OxyQ from Streptomyces rimosus.